A 298-amino-acid polypeptide reads, in one-letter code: HTH-type transcriptional regulator ArgP (298 aa).

The region spanning 4–60 (LDYKWIEALDAVVAQGGFERAAEELYISQSAVSQRIKQLERFLAQPVLIREQPPKPT) is the HTH lysR-type domain. Positions 21–40 (FERAAEELYISQSAVSQRIK) form a DNA-binding region, H-T-H motif.

This sequence belongs to the LysR transcriptional regulatory family. As to quaternary structure, homodimer.

Controls the transcription of genes involved in arginine and lysine metabolism. This chain is HTH-type transcriptional regulator ArgP, found in Vibrio vulnificus (strain CMCP6).